The primary structure comprises 511 residues: ATP synthase subunit alpha, mitochondrial (511 aa).

Position 171–178 (171–178 (GDRQTGKT)) interacts with ATP.

The protein belongs to the ATPase alpha/beta chains family. As to quaternary structure, F-type ATPases have 2 components, CF(1) - the catalytic core - and CF(0) - the membrane proton channel. CF(1) has five subunits: alpha(3), beta(3), gamma(1), delta(1), epsilon(1). CF(0) has three main subunits: a, b and c.

The protein resides in the mitochondrion. It is found in the mitochondrion inner membrane. Functionally, mitochondrial membrane ATP synthase (F(1)F(0) ATP synthase or Complex V) produces ATP from ADP in the presence of a proton gradient across the membrane which is generated by electron transport complexes of the respiratory chain. F-type ATPases consist of two structural domains, F(1) - containing the extramembraneous catalytic core, and F(0) - containing the membrane proton channel, linked together by a central stalk and a peripheral stalk. During catalysis, ATP synthesis in the catalytic domain of F(1) is coupled via a rotary mechanism of the central stalk subunits to proton translocation. Subunits alpha and beta form the catalytic core in F(1). Rotation of the central stalk against the surrounding alpha(3)beta(3) subunits leads to hydrolysis of ATP in three separate catalytic sites on the beta subunits. Subunit alpha does not bear the catalytic high-affinity ATP-binding sites. This Oenothera biennis (German evening primrose) protein is ATP synthase subunit alpha, mitochondrial (ATPA).